Consider the following 352-residue polypeptide: 3'(2'),5'-bisphosphate nucleotidase (352 aa).

Asp-45 (proton acceptor) is an active-site residue. Positions 68, 133, 135, and 136 each coordinate Mg(2+). Thr-138 acts as the Proton acceptor in catalysis. Adenosine 3',5'-bisphosphate-binding residues include Thr-138, His-240, Ser-264, Lys-267, Arg-281, and Asp-294. Residues His-240, Ser-264, Lys-267, Arg-281, and Asp-294 each coordinate AMP. Asp-294 serves as a coordination point for Mg(2+).

It belongs to the inositol monophosphatase superfamily. Mg(2+) serves as cofactor.

The enzyme catalyses 3'-phosphoadenylyl sulfate + H2O = adenosine 5'-phosphosulfate + phosphate. The catalysed reaction is adenosine 3',5'-bisphosphate + H2O = AMP + phosphate. It carries out the reaction adenosine 2',5'-bisphosphate + H2O = AMP + phosphate. Phosphatase that converts adenosine 3'-phosphate 5'-phosphosulfate (PAPS) to adenosine 5'-phosphosulfate (APS) and 3'(2')-phosphoadenosine 5'-phosphate (PAP) to AMP. May regulate the flux of sulfur in the sulfur-activation pathway by converting PAPS to APS. Involved in osmoadaptation. This is 3'(2'),5'-bisphosphate nucleotidase from Emericella nidulans (strain FGSC A4 / ATCC 38163 / CBS 112.46 / NRRL 194 / M139) (Aspergillus nidulans).